Reading from the N-terminus, the 230-residue chain is Pyridoxal phosphate homeostasis protein (230 aa).

Lys36 carries the post-translational modification N6-(pyridoxal phosphate)lysine.

This sequence belongs to the pyridoxal phosphate-binding protein YggS/PROSC family.

Its function is as follows. Perhaps involved in proline biosynthesis. Pyridoxal 5'-phosphate (PLP)-binding protein, which is involved in PLP homeostasis. This is Pyridoxal phosphate homeostasis protein from Pseudomonas aeruginosa (strain ATCC 15692 / DSM 22644 / CIP 104116 / JCM 14847 / LMG 12228 / 1C / PRS 101 / PAO1).